The chain runs to 459 residues: NADH-ubiquinone oxidoreductase chain 4 (459 aa).

12 helical membrane-spanning segments follow: residues 20–42 (PKWLWSATTTHSLIIASLSLTLF), 61–81 (MISTPLIILTCWLLPLMIIAS), 103–123 (LQALLIMAFSATEIILFYIMF), 148–168 (IYFLFYTLAGSLPLLVALLYL), 194–214 (FLWVACVTAFLVKMPLYGVHL), 224–244 (PVAGSMILAAILLKLGGYGMI), 257–277 (LAYPFIILALWGIIMTGSICM), 284–303 (SLIAYSSVSHMGLVASGILI), 307–329 (WGFTGAIILMIAHGLTSSALFCL), 350–370 (IILPLMATWWFIMSLANMALP), 392–414 (TILLTGTGTLITASYSLYLYMSS), and 435–455 (LLLTLHIIPIILLMIKPELIW).

It belongs to the complex I subunit 4 family.

The protein resides in the mitochondrion membrane. The enzyme catalyses a ubiquinone + NADH + 5 H(+)(in) = a ubiquinol + NAD(+) + 4 H(+)(out). In terms of biological role, core subunit of the mitochondrial membrane respiratory chain NADH dehydrogenase (Complex I) that is believed to belong to the minimal assembly required for catalysis. Complex I functions in the transfer of electrons from NADH to the respiratory chain. The immediate electron acceptor for the enzyme is believed to be ubiquinone. This chain is NADH-ubiquinone oxidoreductase chain 4 (MT-ND4), found in Polypterus ornatipinnis (Ornate bichir).